A 555-amino-acid polypeptide reads, in one-letter code: Poly(A) polymerase PAPa (555 aa).

Positions M1–K20 are disordered. ATP is bound by residues F86–S88, D99–D101, D153, K214, Y223, and G232–V233. Positions 99, 101, and 153 each coordinate Mg(2+). The segment at K532–A555 is disordered.

The protein belongs to the poly(A) polymerase family. It depends on Mg(2+) as a cofactor. The cofactor is Mn(2+).

Its subcellular location is the nucleus. It carries out the reaction RNA(n) + ATP = RNA(n)-3'-adenine ribonucleotide + diphosphate. Polymerase that creates the 3'-poly(A) tail of mRNA's. May acquire specificity through interaction with a cleavage and polyadenylation factor. The protein is Poly(A) polymerase PAPa (PAPA) of Candida albicans (strain SC5314 / ATCC MYA-2876) (Yeast).